Reading from the N-terminus, the 933-residue chain is 2-oxoglutarate dehydrogenase E1 component (933 aa).

It belongs to the alpha-ketoglutarate dehydrogenase family. In terms of assembly, homodimer. Part of the 2-oxoglutarate dehydrogenase (OGDH) complex composed of E1 (2-oxoglutarate dehydrogenase), E2 (dihydrolipoamide succinyltransferase) and E3 (dihydrolipoamide dehydrogenase); the complex contains multiple copies of the three enzymatic components (E1, E2 and E3). The cofactor is thiamine diphosphate.

The enzyme catalyses N(6)-[(R)-lipoyl]-L-lysyl-[protein] + 2-oxoglutarate + H(+) = N(6)-[(R)-S(8)-succinyldihydrolipoyl]-L-lysyl-[protein] + CO2. E1 component of the 2-oxoglutarate dehydrogenase (OGDH) complex which catalyzes the decarboxylation of 2-oxoglutarate, the first step in the conversion of 2-oxoglutarate to succinyl-CoA and CO(2). The protein is 2-oxoglutarate dehydrogenase E1 component of Staphylococcus saprophyticus subsp. saprophyticus (strain ATCC 15305 / DSM 20229 / NCIMB 8711 / NCTC 7292 / S-41).